The sequence spans 252 residues: Chitooligosaccharide deacetylase (252 aa).

Residue H125 coordinates Mg(2+).

This sequence belongs to the YdjC deacetylase family. ChbG subfamily. Homodimer. Mg(2+) is required as a cofactor.

The protein localises to the cytoplasm. It carries out the reaction N,N'-diacetylchitobiose + H2O = N-acetyl-beta-D-glucosaminyl-(1-&gt;4)-D-glucosamine + acetate. The catalysed reaction is diacetylchitobiose-6'-phosphate + H2O = N'-monoacetylchitobiose-6'-phosphate + acetate. It functions in the pathway glycan degradation; chitin degradation. Its function is as follows. Involved in the degradation of chitin. ChbG is essential for growth on the acetylated chitooligosaccharides chitobiose and chitotriose but is dispensable for growth on cellobiose and chitosan dimer, the deacetylated form of chitobiose. Deacetylation of chitobiose-6-P and chitotriose-6-P is necessary for both the activation of the chb promoter by the regulatory protein ChbR and the hydrolysis of phosphorylated beta-glucosides by the phospho-beta-glucosidase ChbF. Catalyzes the removal of only one acetyl group from chitobiose-6-P to yield monoacetylchitobiose-6-P, the inducer of ChbR and the substrate of ChbF. The polypeptide is Chitooligosaccharide deacetylase (Escherichia coli O157:H7).